Consider the following 363-residue polypeptide: MDKYELVKDIGAGNFGVARLMKVKNSKELVAMKYIERGPKIDENVAREIINHRSLRHPNIIRFKEVVLTPTHLAIAMEYAAGGELFERICSAGRFSEDEARYFFQQLISGVSYCHAMQICHRDLKLENTLLDGSPAPRLKICDFGYSKSSLLHSRPKSTVGTPAYIAPEVLSRREYDGKMADVWSCGVTLYVMLVGAYPFEDQEDPKNFRKTIQKIMAVQYKIPDYVHISQDCKNLLSRIFVANSLKRITIAEIKKHSWFLKNLPRELTETAQAAYFKKENPTFSLQTVEEIMKIVADAKTPPPVSRSIGGFGWGGNGDADGKEEDAEDVEEEEEEVEEEEDDEDEYDKTVKEVHASGEVRIS.

The 257-residue stretch at 4–260 (YELVKDIGAG…IAEIKKHSWF (257 aa)) folds into the Protein kinase domain. ATP is bound by residues 10-18 (IGAGNFGVA) and Lys33. Catalysis depends on Asp123, which acts as the Proton acceptor. The segment at 306–363 (SRSIGGFGWGGNGDADGKEEDAEDVEEEEEEVEEEEDDEDEYDKTVKEVHASGEVRIS) is disordered. The span at 310-319 (GGFGWGGNGD) shows a compositional bias: gly residues. Residues 322-347 (GKEEDAEDVEEEEEEVEEEEDDEDEY) show a composition bias toward acidic residues. Over residues 348–363 (DKTVKEVHASGEVRIS) the composition is skewed to basic and acidic residues.

Belongs to the protein kinase superfamily. Ser/Thr protein kinase family. In terms of assembly, interacts with TOPP1. In terms of tissue distribution, expressed in seedlings.

It catalyses the reaction L-seryl-[protein] + ATP = O-phospho-L-seryl-[protein] + ADP + H(+). The enzyme catalyses L-threonyl-[protein] + ATP = O-phospho-L-threonyl-[protein] + ADP + H(+). The sequence is that of Serine/threonine-protein kinase SRK2A (SRK2A) from Arabidopsis thaliana (Mouse-ear cress).